The following is a 394-amino-acid chain: Elongation factor Tu (394 aa).

Residues K10–E204 enclose the tr-type G domain. Residues G19–T26 are G1. G19 to T26 contacts GTP. T26 lines the Mg(2+) pocket. A G2 region spans residues G60 to N64. Residues D81–G84 form a G3 region. Residues D81–H85 and N136–D139 each bind GTP. The interval N136–D139 is G4. The interval S174 to L176 is G5.

Belongs to the TRAFAC class translation factor GTPase superfamily. Classic translation factor GTPase family. EF-Tu/EF-1A subfamily. Monomer.

It is found in the cytoplasm. It carries out the reaction GTP + H2O = GDP + phosphate + H(+). GTP hydrolase that promotes the GTP-dependent binding of aminoacyl-tRNA to the A-site of ribosomes during protein biosynthesis. This Ureaplasma urealyticum serovar 10 (strain ATCC 33699 / Western) protein is Elongation factor Tu.